The sequence spans 119 residues: Large ribosomal subunit protein uL18 (119 aa).

A disordered region spans residues 1-26 (MGQNDKAARRQKIKLRSKTRGQGTAA). The segment covering 9-19 (RRQKIKLRSKT) has biased composition (basic residues).

Belongs to the universal ribosomal protein uL18 family. Part of the 50S ribosomal subunit; part of the 5S rRNA/L5/L18/L25 subcomplex. Contacts the 5S and 23S rRNAs.

This is one of the proteins that bind and probably mediate the attachment of the 5S RNA into the large ribosomal subunit, where it forms part of the central protuberance. This is Large ribosomal subunit protein uL18 from Prosthecochloris aestuarii (strain DSM 271 / SK 413).